A 477-amino-acid polypeptide reads, in one-letter code: Ribulose bisphosphate carboxylase large chain (477 aa).

Residues M1–S2 constitute a propeptide that is removed on maturation. N-acetylproline is present on P3. Residue K14 is modified to N6,N6,N6-trimethyllysine. The substrate site is built by N123 and T173. The active-site Proton acceptor is the K175. Substrate is bound at residue K177. Positions 201, 203, and 204 each coordinate Mg(2+). K201 is modified (N6-carboxylysine). The active-site Proton acceptor is the H294. Substrate-binding residues include R295, H327, and S379.

The protein belongs to the RuBisCO large chain family. Type I subfamily. As to quaternary structure, heterohexadecamer of 8 large chains and 8 small chains; disulfide-linked. The disulfide link is formed within the large subunit homodimers. Mg(2+) serves as cofactor. Post-translationally, the disulfide bond which can form in the large chain dimeric partners within the hexadecamer appears to be associated with oxidative stress and protein turnover.

Its subcellular location is the plastid. The protein resides in the chloroplast. The catalysed reaction is 2 (2R)-3-phosphoglycerate + 2 H(+) = D-ribulose 1,5-bisphosphate + CO2 + H2O. It carries out the reaction D-ribulose 1,5-bisphosphate + O2 = 2-phosphoglycolate + (2R)-3-phosphoglycerate + 2 H(+). Functionally, ruBisCO catalyzes two reactions: the carboxylation of D-ribulose 1,5-bisphosphate, the primary event in carbon dioxide fixation, as well as the oxidative fragmentation of the pentose substrate in the photorespiration process. Both reactions occur simultaneously and in competition at the same active site. The polypeptide is Ribulose bisphosphate carboxylase large chain (Atropa belladonna (Belladonna)).